Here is a 204-residue protein sequence, read N- to C-terminus: MALRLRSGGIVNHELLKAVEQTPRTLFAPPQYQDEVYSKRLIPLECGSFMEGCDMAVRLLHCLNLKPGQRILEVGTGSGFTAAVMGRIAERVLTIDRYQTLVASAQKNLEKAGLRNVVVRQADGSAGVPGEGTFDRILITAAFNSLPRTFSDHLVSGGTLLVPIMMSETHCRIVRVNRTGSRFDREDLFDAPYLPIVPQVASFL.

The protein belongs to the methyltransferase superfamily. L-isoaspartyl/D-aspartyl protein methyltransferase family. In terms of assembly, monomer.

Its subcellular location is the cytoplasm. The enzyme catalyses [protein]-L-isoaspartate + S-adenosyl-L-methionine = [protein]-L-isoaspartate alpha-methyl ester + S-adenosyl-L-homocysteine. In terms of biological role, catalyzes the methyl esterification of L-isoaspartyl residues in peptides and proteins that result from spontaneous decomposition of normal L-aspartyl and L-asparaginyl residues. It plays a role in the repair and/or degradation of damaged proteins. This Rhizobium meliloti (strain 1021) (Ensifer meliloti) protein is Protein-L-isoaspartate O-methyltransferase (pcm).